The following is a 31-amino-acid chain: Cytochrome b6-f complex subunit 6 (31 aa).

Residues 3–23 (LFIGYIIFLVAFFGLATGLFL) form a helical membrane-spanning segment.

The protein belongs to the PetL family. As to quaternary structure, the 4 large subunits of the cytochrome b6-f complex are cytochrome b6, subunit IV (17 kDa polypeptide, PetD), cytochrome f and the Rieske protein, while the 4 small subunits are PetG, PetL, PetM and PetN. The complex functions as a dimer.

It is found in the plastid. It localises to the chloroplast thylakoid membrane. Its function is as follows. Component of the cytochrome b6-f complex, which mediates electron transfer between photosystem II (PSII) and photosystem I (PSI), cyclic electron flow around PSI, and state transitions. PetL is important for photoautotrophic growth as well as for electron transfer efficiency and stability of the cytochrome b6-f complex. The protein is Cytochrome b6-f complex subunit 6 of Porphyra purpurea (Red seaweed).